A 1128-amino-acid chain; its full sequence is Major DNA-binding protein (1128 aa).

The tract at residues 1104–1128 (LGGGGQGSGGRRKRRLATVLPGLEV) is required for nuclear localization.

It belongs to the herpesviridae major DNA-binding protein family. As to quaternary structure, homooligomers. Forms double-helical filaments necessary for the formation of replication compartments within the host nucleus. Interacts with the origin-binding protein. Interacts with the helicase primase complex; this interaction stimulates primer synthesis activity of the helicase-primase complex. Interacts with the DNA polymerase. Interacts with the alkaline exonuclease; this interaction increases its nuclease processivity.

It localises to the virion tegument. Its subcellular location is the host nucleus. Plays several crucial roles in viral infection. Participates in the opening of the viral DNA origin to initiate replication by interacting with the origin-binding protein. May disrupt loops, hairpins and other secondary structures present on ssDNA to reduce and eliminate pausing of viral DNA polymerase at specific sites during elongation. Promotes viral DNA recombination by performing strand-transfer, characterized by the ability to transfer a DNA strand from a linear duplex to a complementary single-stranded DNA circle. Can also catalyze the renaturation of complementary single strands. Additionally, reorganizes the host cell nucleus, leading to the formation of prereplicative sites and replication compartments. This process is driven by the protein which can form double-helical filaments in the absence of DNA. The polypeptide is Major DNA-binding protein (Epstein-Barr virus (strain GD1) (HHV-4)).